The following is a 391-amino-acid chain: Phosphoglycerate kinase (391 aa).

Substrate contacts are provided by residues D21–N23, R36, H59–R62, R113, and R146. Residues K197, E319, and G345–T348 each bind ATP.

It belongs to the phosphoglycerate kinase family. As to quaternary structure, monomer.

The protein localises to the cytoplasm. It catalyses the reaction (2R)-3-phosphoglycerate + ATP = (2R)-3-phospho-glyceroyl phosphate + ADP. It functions in the pathway carbohydrate degradation; glycolysis; pyruvate from D-glyceraldehyde 3-phosphate: step 2/5. This is Phosphoglycerate kinase from Shewanella putrefaciens (strain CN-32 / ATCC BAA-453).